We begin with the raw amino-acid sequence, 452 residues long: Phosphoglucosamine mutase (452 aa).

Catalysis depends on Ser-109, which acts as the Phosphoserine intermediate. 4 residues coordinate Mg(2+): Ser-109, Asp-248, Asp-250, and Asp-252. Ser-109 bears the Phosphoserine mark.

This sequence belongs to the phosphohexose mutase family. Mg(2+) is required as a cofactor. Post-translationally, activated by phosphorylation.

It catalyses the reaction alpha-D-glucosamine 1-phosphate = D-glucosamine 6-phosphate. In terms of biological role, catalyzes the conversion of glucosamine-6-phosphate to glucosamine-1-phosphate. This is Phosphoglucosamine mutase from Erythrobacter litoralis (strain HTCC2594).